Consider the following 459-residue polypeptide: tRNA(Ile2) 2-agmatinylcytidine synthetase TiaS (459 aa).

The OB DNA-binding region spans 282 to 360; the sequence is VRVRVWVASI…TINLEKLHII (79 aa).

It belongs to the TiaS family.

The protein resides in the cytoplasm. The enzyme catalyses cytidine(34) in tRNA(Ile2) + agmatine + ATP + H2O = 2-agmatinylcytidine(34) in tRNA(Ile2) + AMP + 2 phosphate + 2 H(+). In terms of biological role, ATP-dependent agmatine transferase that catalyzes the formation of 2-agmatinylcytidine (agm2C) at the wobble position (C34) of tRNA(Ile2), converting the codon specificity from AUG to AUA. This chain is tRNA(Ile2) 2-agmatinylcytidine synthetase TiaS, found in Staphylothermus marinus (strain ATCC 43588 / DSM 3639 / JCM 9404 / F1).